The chain runs to 367 residues: Adenosine deaminase (367 aa).

Positions 46 and 48 each coordinate Zn(2+). Residues 48–50 (HLD), D176, and G205 contribute to the a purine D-ribonucleoside site. A gating helix loop; regulates binding affinity for substrates and thus substrate selectivity region spans residues 174–188 (TGDGGLSHERMKEAA). H230 contacts Zn(2+). A purine D-ribonucleoside is bound by residues E233, H257, and D314. Residue D314 coordinates Zn(2+).

The protein belongs to the metallo-dependent hydrolases superfamily. Adenosine and AMP deaminases family. The cofactor is Zn(2+).

The catalysed reaction is adenosine + H2O + H(+) = inosine + NH4(+). It catalyses the reaction S-methyl-5'-thioadenosine + H2O + H(+) = S-methyl-5'-thioinosine + NH4(+). It functions in the pathway purine metabolism; purine nucleoside salvage. Inhibited by coformycin and methylthiocoformycin (MT-coformycin). Functionally, catalyzes the hydrolytic deamination of adenosine to produce inosine. Unlike mammalian adenosine deaminases, also catalyzes the deamination of 5'-methylthioadenosine (MTA), a by-product of polyamine biosynthesis, to produce 5'-methylthioinosine (MTI). Plays an essential role in the purine salvage pathway which allows the parasite to use host cell purines for the synthesis of nucleic acids. This is Adenosine deaminase from Plasmodium falciparum (isolate 3D7).